A 958-amino-acid chain; its full sequence is Dermatan-sulfate epimerase (958 aa).

The first 22 residues, 1 to 22, serve as a signal peptide directing secretion; it reads MRTHTRGAPSVFFIYLLCFVSA. The Lumenal portion of the chain corresponds to 23 to 902; the sequence is YITDENPEVM…APSLSASYTR (880 aa). N183 is a glycosylation site (N-linked (GlcNAc...) (complex) asparagine). H205 acts as the Proton donor in catalysis. The active site involves Y261. Residue N336 is glycosylated (N-linked (GlcNAc...) (high mannose) asparagine). N411 carries an N-linked (GlcNAc...) (complex) asparagine glycan. 2 residues coordinate Mn(2+): H452 and E470. The active site involves Y473. A Mn(2+)-binding site is contributed by N481. N-linked (GlcNAc...) (complex) asparagine glycosylation is present at N642. N-linked (GlcNAc...) (paucimannose) asparagine glycosylation occurs at N648. Residues 903–923 form a helical membrane-spanning segment; that stretch reads LFLILNIAIFFVMLAMQLTYF. The Cytoplasmic segment spans residues 924–933; that stretch reads QRAQSLHGQR. The chain crosses the membrane as a helical span at residues 934 to 954; sequence CLYAVLLIDSCILLWLYSSCS. At 955–958 the chain is on the lumenal side; the sequence is QSQC.

Belongs to the dermatan-sulfate isomerase family. Requires Mn(2+) as cofactor. In terms of processing, N-glycosylated. Glycosylation is important for enzymatic activity. In terms of tissue distribution, ubiquitously expressed with higher expression in kidney and ovary and lower expression in brain, colon and thymus. Also expressed in renal cell carcinomas, brain tumors, and in a part of melanomas and adenocarcinomas from organs other than the breast. Expressed in squamous cell carcinomas (SCC), glioma, and some adenocarcinoma cell lines, but not in breast cancer cell lines or any normal tissues (at protein level).

It is found in the endoplasmic reticulum membrane. The protein resides in the golgi apparatus membrane. It localises to the cytoplasmic vesicle membrane. Its subcellular location is the microsome membrane. It carries out the reaction chondroitin 4'-sulfate = dermatan 4'-sulfate. It participates in glycan metabolism; chondroitin sulfate biosynthesis. It functions in the pathway glycan metabolism; heparan sulfate biosynthesis. In terms of biological role, converts D-glucuronic acid to L-iduronic acid (IdoUA) residues. Plays an important role in the biosynthesis of the glycosaminoglycan/mucopolysaccharide dermatan sulfate. This chain is Dermatan-sulfate epimerase (DSE), found in Homo sapiens (Human).